The primary structure comprises 43 residues: Protein PsbN (43 aa).

A helical membrane pass occupies residues 5–27 (TLIAIFISCSLVSFTGYALYTAF).

This sequence belongs to the PsbN family.

The protein localises to the plastid. The protein resides in the chloroplast thylakoid membrane. Functionally, may play a role in photosystem I and II biogenesis. In Lopidium concinnum (Moss), this protein is Protein PsbN.